The primary structure comprises 43 residues: Truncated K3L homolog (43 aa).

It belongs to the orthopoxvirus OPG041 family.

In Cynomys gunnisoni (Gunnison's prairie dog), this protein is Truncated K3L homolog (OPG041).